We begin with the raw amino-acid sequence, 418 residues long: Putative ion-transport protein YfeO (418 aa).

12 helical membrane-spanning segments follow: residues 10-30 (LLLS…LIMV), 54-74 (DSPL…GLVI), 99-119 (ALPG…SLGP), 120-140 (EHPI…RLLP), 149-169 (ILAS…AALI), 186-206 (LFAP…FFHP), 223-243 (ILSG…AVWC), 258-278 (VFVL…GGPV), 300-320 (DYFL…ASGF), 322-342 (GGRI…LHEH), 343-363 (VPAV…VLVV), and 371-391 (LFMA…CIVM).

It belongs to the chloride channel (TC 2.A.49) family.

Its subcellular location is the cell membrane. The protein is Putative ion-transport protein YfeO of Escherichia coli O127:H6 (strain E2348/69 / EPEC).